Here is a 446-residue protein sequence, read N- to C-terminus: Glucose-6-phosphate isomerase (446 aa).

E288 (proton donor) is an active-site residue. Catalysis depends on residues H309 and K423.

It belongs to the GPI family.

The protein localises to the cytoplasm. The catalysed reaction is alpha-D-glucose 6-phosphate = beta-D-fructose 6-phosphate. The protein operates within carbohydrate biosynthesis; gluconeogenesis. Its pathway is carbohydrate degradation; glycolysis; D-glyceraldehyde 3-phosphate and glycerone phosphate from D-glucose: step 2/4. Catalyzes the reversible isomerization of glucose-6-phosphate to fructose-6-phosphate. The sequence is that of Glucose-6-phosphate isomerase from Lacticaseibacillus casei (strain BL23) (Lactobacillus casei).